Reading from the N-terminus, the 196-residue chain is Endonuclease V (196 aa).

2 residues coordinate Mg(2+): Asp-37 and Asp-98.

The protein belongs to the endonuclease V family. Mg(2+) is required as a cofactor.

It localises to the cytoplasm. The catalysed reaction is Endonucleolytic cleavage at apurinic or apyrimidinic sites to products with a 5'-phosphate.. Functionally, DNA repair enzyme involved in the repair of deaminated bases. Selectively cleaves double-stranded DNA at the second phosphodiester bond 3' to a deoxyinosine leaving behind the intact lesion on the nicked DNA. This Sulfolobus acidocaldarius (strain ATCC 33909 / DSM 639 / JCM 8929 / NBRC 15157 / NCIMB 11770) protein is Endonuclease V.